A 321-amino-acid polypeptide reads, in one-letter code: Nucleus-vacuole junction protein 1 (321 aa).

Residues 1 to 22 (MTRPPLVRGIFSLGLSVAVLKG) form the signal peptide. Residues 73 to 125 (ELSWRKVFNFISRQSSELDARIYVLILLLSFLLPIAWTVLDGDRETTLEDKDN) are TSC13-binding. Residues 94-114 (IYVLILLLSFLLPIAWTVLDG) form a helical membrane-spanning segment. The tract at residues 139-195 (KHYNDGERAVLQFGKNRSEPIILSYKDMNVLEGEHEFTSKEEHSNSHLTSKSENALS) is OSH1-binding. Serine 156 carries the post-translational modification Phosphoserine. The segment covering 174 to 183 (EFTSKEEHSN) has biased composition (basic and acidic residues). The interval 174–194 (EFTSKEEHSNSHLTSKSENAL) is disordered. Residues 184 to 194 (SHLTSKSENAL) show a composition bias toward polar residues. Serine 199 is modified (phosphoserine). A disordered region spans residues 210-275 (QLEEDKNEPN…SLKSSTSFPI (66 aa)). The interval 233–321 (DCSSSSEVES…EQAYSQPFRY (89 aa)) is VAC8-binding. The segment covering 242–262 (SQSKCRKESTAEPDSLSRDTR) has biased composition (basic and acidic residues). The segment covering 263–272 (TTSSLKSSTS) has biased composition (low complexity). Phosphoserine occurs at positions 285 and 298. Positions 299–321 (PTKSSNLDAQVNTEQAYSQPFRY) are disordered.

In terms of assembly, interacts with OSH1, TSC13 and VAC8.

It is found in the nucleus outer membrane. Involved in the formation of nucleus-vacuole (NV) junctions during piecemeal microautophagy of the nucleus (PMN). NV junctions are interorganelle interfaces mediated by NVJ1 in the nuclear envelope and VAC8 on the vacuole membrane. Together, NVJ1 and VAC8 form Velcro-like patches through which teardrop-like portions of the nucleus are pinched off into the vacuolar lumen and degraded by the PMN process. Also acts as an outer-nuclear membrane receptor for OSH1 and TSC13. The polypeptide is Nucleus-vacuole junction protein 1 (NVJ1) (Saccharomyces cerevisiae (strain YJM789) (Baker's yeast)).